A 163-amino-acid polypeptide reads, in one-letter code: Globin CTT-V (163 aa).

The signal sequence occupies residues 1–16; it reads MKFFAVLTLCIIGAIA. In terms of domain architecture, Globin spans 18–163; sequence PLTSDEANLV…YTVAFEVIPA (146 aa). Residues His-76 and His-111 each coordinate heme b.

This sequence belongs to the globin family.

This is Globin CTT-V (CTT-V) from Chironomus thummi piger (Midge).